A 439-amino-acid polypeptide reads, in one-letter code: Xylose isomerase (439 aa).

Residues histidine 101 and aspartate 104 contribute to the active site. Positions 232, 268, 271, 296, 307, 309, and 339 each coordinate Mg(2+).

It belongs to the xylose isomerase family. As to quaternary structure, homotetramer. Requires Mg(2+) as cofactor.

It localises to the cytoplasm. It catalyses the reaction alpha-D-xylose = alpha-D-xylulofuranose. This Thermoanaerobacterium saccharolyticum protein is Xylose isomerase (xylA).